The chain runs to 580 residues: 3-(3-hydroxy-phenyl)propionate/3-hydroxycinnamic acid hydroxylase (580 aa).

FAD-binding positions include aspartate 14–glutamate 43 and phenylalanine 291–aspartate 301.

The protein belongs to the PheA/TfdB FAD monooxygenase family. FAD serves as cofactor.

It catalyses the reaction 3-(3-hydroxyphenyl)propanoate + NADH + O2 + H(+) = 3-(2,3-dihydroxyphenyl)propanoate + NAD(+) + H2O. The catalysed reaction is (2E)-3-(3-hydroxyphenyl)prop-2-enoate + NADH + O2 + H(+) = (2E)-3-(2,3-dihydroxyphenyl)prop-2-enoate + NAD(+) + H2O. Its pathway is aromatic compound metabolism; 3-phenylpropanoate degradation. Catalyzes the insertion of one atom of molecular oxygen into position 2 of the phenyl ring of 3-(3-hydroxyphenyl)propionate (3-HPP) and hydroxycinnamic acid (3HCI). The sequence is that of 3-(3-hydroxy-phenyl)propionate/3-hydroxycinnamic acid hydroxylase from Mycobacterium avium (strain 104).